A 258-amino-acid polypeptide reads, in one-letter code: Acyl-[acyl-carrier-protein]--UDP-N-acetylglucosamine O-acyltransferase (258 aa).

This sequence belongs to the transferase hexapeptide repeat family. LpxA subfamily. As to quaternary structure, homotrimer.

It localises to the cytoplasm. The enzyme catalyses a (3R)-hydroxyacyl-[ACP] + UDP-N-acetyl-alpha-D-glucosamine = a UDP-3-O-[(3R)-3-hydroxyacyl]-N-acetyl-alpha-D-glucosamine + holo-[ACP]. The protein operates within glycolipid biosynthesis; lipid IV(A) biosynthesis; lipid IV(A) from (3R)-3-hydroxytetradecanoyl-[acyl-carrier-protein] and UDP-N-acetyl-alpha-D-glucosamine: step 1/6. Involved in the biosynthesis of lipid A, a phosphorylated glycolipid that anchors the lipopolysaccharide to the outer membrane of the cell. The chain is Acyl-[acyl-carrier-protein]--UDP-N-acetylglucosamine O-acyltransferase from Pseudomonas entomophila (strain L48).